Here is a 286-residue protein sequence, read N- to C-terminus: Peroxisomal membrane protein pex14 (286 aa).

Residues 61–69 (TSNFVSRDW) carry the SH3-binding motif. The stretch at 122 to 214 (KILENLDEQT…REISSLRCLQ (93 aa)) forms a coiled coil. A disordered region spans residues 218-239 (KKDDTFATTSNSSIPVLENPLD).

This sequence belongs to the peroxin-14 family. In terms of assembly, interacts with PEX13 (via SH3 domain); forming the PEX13-PEX14 docking complex. Interacts with PEX5 (via WxxxF/Y motifs).

Its subcellular location is the peroxisome membrane. Component of the PEX13-PEX14 docking complex, a translocon channel that specifically mediates the import of peroxisomal cargo proteins bound to PEX5 receptor. The PEX13-PEX14 docking complex forms a large import pore which can be opened to a diameter of about 9 nm. Mechanistically, PEX5 receptor along with cargo proteins associates with the PEX14 subunit of the PEX13-PEX14 docking complex in the cytosol, leading to the insertion of the receptor into the organelle membrane with the concomitant translocation of the cargo into the peroxisome matrix. The protein is Peroxisomal membrane protein pex14 (pex14) of Schizosaccharomyces pombe (strain 972 / ATCC 24843) (Fission yeast).